Consider the following 1427-residue polypeptide: DNA-directed RNA polymerase subunit beta' (1427 aa).

Zn(2+)-binding residues include Cys-66, Cys-68, Cys-81, and Cys-84. The Mg(2+) site is built by Asp-472, Asp-474, and Asp-476. Zn(2+)-binding residues include Cys-815, Cys-889, Cys-896, and Cys-899.

The protein belongs to the RNA polymerase beta' chain family. In terms of assembly, the RNAP catalytic core consists of 2 alpha, 1 beta, 1 beta' and 1 omega subunit. When a sigma factor is associated with the core the holoenzyme is formed, which can initiate transcription. It depends on Mg(2+) as a cofactor. Requires Zn(2+) as cofactor.

The catalysed reaction is RNA(n) + a ribonucleoside 5'-triphosphate = RNA(n+1) + diphosphate. Functionally, DNA-dependent RNA polymerase catalyzes the transcription of DNA into RNA using the four ribonucleoside triphosphates as substrates. The polypeptide is DNA-directed RNA polymerase subunit beta' (Bacteroides fragilis (strain YCH46)).